A 1444-amino-acid chain; its full sequence is Adhesin P1 (1444 aa).

The signal sequence occupies residues 1–30 (MHQPKKRLAKKSWAFLTAALTLGVITGVGG). Disordered stretches follow at residues 231–283 (QSSF…EVER), 845–885 (IPFE…ALPN), and 927–949 (GDSN…TNEG). The span at 240 to 257 (LQKDSPVKDSSKQGEKLS) shows a compositional bias: basic and acidic residues. Residues 258–272 (ETTASSMSSGMATST) show a composition bias toward low complexity. Polar residues-rich tracts occupy residues 851–860 (KPSNNSTPFD) and 868–878 (VTPSGGSSKPT). The segment covering 933–946 (FNKDSEQKWDKTET) has biased composition (basic and acidic residues). Residues 1353-1373 (VLPLIVTVPIVVIILSVTLGL) traverse the membrane as a helical segment. The segment at 1419 to 1444 (NAPKKLKQATPTKPTPKTPPKPPVKQ) is disordered. Positions 1431–1444 (KPTPKTPPKPPVKQ) are enriched in pro residues.

The protein belongs to the adhesin P1 family.

It is found in the cell membrane. Functionally, the protein is the major adhesin mediating the attachment of this mycoplasma to the ciliated epithelium. The chain is Adhesin P1 (mgpA) from Mycoplasma genitalium (strain ATCC 33530 / DSM 19775 / NCTC 10195 / G37) (Mycoplasmoides genitalium).